The chain runs to 38 residues: Large ribosomal subunit protein bL36 (38 aa).

This sequence belongs to the bacterial ribosomal protein bL36 family.

The polypeptide is Large ribosomal subunit protein bL36 (Buchnera aphidicola subsp. Baizongia pistaciae (strain Bp)).